Reading from the N-terminus, the 68-residue chain is Alpha-conotoxin-like Mr1.2 (68 aa).

The first 21 residues, 1–21, serve as a signal peptide directing secretion; it reads MGMRMMFTVFLLVVLATTVVS. A propeptide spanning residues 22-48 is cleaved from the precursor; that stretch reads FTSDRGSDGRNAAAKDKASDLVALTVK. 2 cysteine pairs are disulfide-bonded: cysteine 50/cysteine 56 and cysteine 51/cysteine 64. A ser-Xaa-Pro motif, crucial for potent interaction with nAChR region spans residues 52-54; sequence SNP. Residue asparagine 65 is modified to Asparagine amide.

Belongs to the conotoxin A superfamily. Expressed by the venom duct.

Its subcellular location is the secreted. In terms of biological role, alpha-conotoxins act on postsynaptic membranes, they bind to the nicotinic acetylcholine receptors (nAChR) and thus inhibit them. This Conus marmoreus (Marble cone) protein is Alpha-conotoxin-like Mr1.2.